Reading from the N-terminus, the 588-residue chain is Adenine deaminase (588 aa).

This sequence belongs to the metallo-dependent hydrolases superfamily. Adenine deaminase family. In terms of assembly, homodimer. Mn(2+) is required as a cofactor.

The enzyme catalyses adenine + H2O + H(+) = hypoxanthine + NH4(+). In Shigella flexneri serotype 5b (strain 8401), this protein is Adenine deaminase.